A 331-amino-acid polypeptide reads, in one-letter code: Mitochondrial respiration co-chaperone MRJ1 (331 aa).

A mitochondrion-targeting transit peptide spans 1–36 (MLSFQATVRPLAVSSRLHSPAAHIWRRNAHTAAMSD). Positions 35–66 (SDDSLDQGSSSSYGDSASQPHLGKGKGRQDSL) are disordered. Residues 40 to 53 (DQGSSSSYGDSASQ) show a composition bias toward low complexity. The J domain occupies 83–147 (DPFEVMALDR…SSRSAFLKTG (65 aa)). The segment at 203–226 (DGSQGWRPYEDPSKGFSPPTSGPA) is disordered. Residues 275–303 (RALAQARYEAATHGHIRREQIRRRVREAE) enclose the IQ domain.

Belongs to the DnaJ family. As to quaternary structure, interacts with QCR2.

The protein localises to the mitochondrion. Mitochondrial co-chaperone required for ubiquinol-cytochrome c oxidoreductase (mitochondrial respiratory chain complex III) activity. The sequence is that of Mitochondrial respiration co-chaperone MRJ1 from Cryptococcus neoformans var. grubii serotype A (strain H99 / ATCC 208821 / CBS 10515 / FGSC 9487) (Filobasidiella neoformans var. grubii).